The chain runs to 247 residues: Uridylate kinase (247 aa).

18–21 (KLSG) lines the ATP pocket. Residue glycine 60 coordinates UMP. Residues glycine 61 and arginine 65 each coordinate ATP. UMP-binding positions include aspartate 80 and 141 to 148 (TGNPFFTT). ATP contacts are provided by threonine 168, tyrosine 174, and aspartate 177.

This sequence belongs to the UMP kinase family. Homohexamer.

Its subcellular location is the cytoplasm. The catalysed reaction is UMP + ATP = UDP + ADP. It participates in pyrimidine metabolism; CTP biosynthesis via de novo pathway; UDP from UMP (UMPK route): step 1/1. With respect to regulation, inhibited by UTP. In terms of biological role, catalyzes the reversible phosphorylation of UMP to UDP. In Pseudomonas savastanoi pv. phaseolicola (strain 1448A / Race 6) (Pseudomonas syringae pv. phaseolicola (strain 1448A / Race 6)), this protein is Uridylate kinase.